Here is a 282-residue protein sequence, read N- to C-terminus: Ammonia transport outward protein 2 (282 aa).

Residues 1-34 (MSDREQSSGNTAFENPKALDSSEGEFISENNDQS) form a disordered region. Position 2 is an N-acetylserine (S2). Phosphoserine is present on residues S2, S7, S21, S22, S28, and S40. Residues 2 to 86 (SDREQSSGNT…GLAPAPVHKF (85 aa)) lie on the Extracellular side of the membrane. Residues 87–107 (ANPAPLGLSGFALTTFVLSMF) traverse the membrane as a helical segment. At 108-119 (NARAQGITIPNV) the chain is on the cytoplasmic side. Residues 120–140 (VVGCAMFYGGLVQLIAGIWEI) traverse the membrane as a helical segment. At 141-150 (ALENTFGGTA) the chain is on the extracellular side. A helical transmembrane segment spans residues 151–171 (LCSFGGFWLSFGAIYIPWFGI). Residues 172 to 184 (LDAYKDKESDLGN) are Cytoplasmic-facing. A helical transmembrane segment spans residues 185–205 (ALGFYLLGWALFTFGLSVCTM). Topologically, residues 206-207 (KS) are extracellular. Residues 208–228 (TIMFFALFFLLAVTFLLLSIA) traverse the membrane as a helical segment. At 229-238 (NFTGEVGVTR) the chain is on the cytoplasmic side. Residues 239–259 (AGGVLGVIVAFIAWYNAYAGI) traverse the membrane as a helical segment. Residues 260–282 (ATRQNSYIMVHPFALPSNDKVFF) are Extracellular-facing.

The protein belongs to the acetate uptake transporter (AceTr) (TC 2.A.96) family.

The protein resides in the cell membrane. In terms of biological role, transporter protein required for ammonia export. Involved in acetate resistance. This chain is Ammonia transport outward protein 2 (ATO2), found in Saccharomyces cerevisiae (strain ATCC 204508 / S288c) (Baker's yeast).